Reading from the N-terminus, the 342-residue chain is Glucokinase (342 aa).

7–12 (GDIGGT) is a binding site for ATP.

It belongs to the bacterial glucokinase family.

It localises to the cytoplasm. The catalysed reaction is D-glucose + ATP = D-glucose 6-phosphate + ADP + H(+). This chain is Glucokinase, found in Nostoc sp. (strain PCC 7120 / SAG 25.82 / UTEX 2576).